The following is a 329-amino-acid chain: BTB/POZ domain-containing adapter for CUL3-mediated RhoA degradation protein 1 (329 aa).

The span at 1-15 (MSAEASGPAAAEAPS) shows a compositional bias: low complexity. The tract at residues 1–21 (MSAEASGPAAAEAPSLEVAKP) is disordered. The 69-residue stretch at 41–109 (KYVKLNVGGS…LRDGSVPLPE (69 aa)) folds into the BTB domain. A disordered region spans residues 280 to 302 (LEATGGAAGGGGASRGEDEDNRE).

Belongs to the BACURD family. As to quaternary structure, homotetramer; forms a two-fold symmetric tetramer in solution. Interacts with CUL3; interaction is direct and forms a 5:5 heterodecamer. Component of the BCR(KCTD13) E3 ubiquitin ligase complex, at least composed of CUL3, KCTD13/BACURD1 and RBX1. Interacts with RHOA; with a preference for RhoA-GDP. Interacts with POLD2 and PCNA. Interacts with SPRTN.

It is found in the nucleus. Its pathway is protein modification; protein ubiquitination. In terms of biological role, substrate-specific adapter of a BCR (BTB-CUL3-RBX1) E3 ubiquitin-protein ligase complex required for synaptic transmission. The BCR(KCTD13) E3 ubiquitin ligase complex mediates the ubiquitination of RHOA, leading to its degradation by the proteasome, thereby regulating the actin cytoskeleton and promoting synaptic transmission. This Bos taurus (Bovine) protein is BTB/POZ domain-containing adapter for CUL3-mediated RhoA degradation protein 1 (KCTD13).